Reading from the N-terminus, the 348-residue chain is Dihydroorotase (348 aa).

2 residues coordinate Zn(2+): His14 and His16. Substrate contacts are provided by residues 16-18 (HLR) and Asn42. Zn(2+)-binding residues include Lys100, His137, and His175. Lys100 carries the post-translational modification N6-carboxylysine. His137 is a binding site for substrate. Leu220 provides a ligand contact to substrate. A Zn(2+)-binding site is contributed by Asp248. Asp248 is a catalytic residue. Residues His252 and Ala264 each coordinate substrate.

The protein belongs to the metallo-dependent hydrolases superfamily. DHOase family. Class II DHOase subfamily. As to quaternary structure, homodimer. The cofactor is Zn(2+).

It catalyses the reaction (S)-dihydroorotate + H2O = N-carbamoyl-L-aspartate + H(+). Its pathway is pyrimidine metabolism; UMP biosynthesis via de novo pathway; (S)-dihydroorotate from bicarbonate: step 3/3. In terms of biological role, catalyzes the reversible cyclization of carbamoyl aspartate to dihydroorotate. In Pseudomonas fluorescens (strain Pf0-1), this protein is Dihydroorotase.